The chain runs to 339 residues: DNA-directed RNA polymerase subunit alpha (339 aa).

The segment at Met-1–Glu-235 is alpha N-terminal domain (alpha-NTD). Residues Phe-251–Tyr-339 form an alpha C-terminal domain (alpha-CTD) region.

This sequence belongs to the RNA polymerase alpha chain family. In terms of assembly, homodimer. The RNAP catalytic core consists of 2 alpha, 1 beta, 1 beta' and 1 omega subunit. When a sigma factor is associated with the core the holoenzyme is formed, which can initiate transcription.

The catalysed reaction is RNA(n) + a ribonucleoside 5'-triphosphate = RNA(n+1) + diphosphate. In terms of biological role, DNA-dependent RNA polymerase catalyzes the transcription of DNA into RNA using the four ribonucleoside triphosphates as substrates. This is DNA-directed RNA polymerase subunit alpha from Rhodopseudomonas palustris (strain BisB18).